The primary structure comprises 663 residues: UvrABC system protein B (663 aa).

The 388-residue stretch at 30–417 (DGIKAGKRHQ…TDKMVEQIIR (388 aa)) folds into the Helicase ATP-binding domain. 43 to 50 (GATGTGKT) is an ATP binding site. Positions 96 to 119 (YYDYYQPEAYVPSTDTFIEKDASI) match the Beta-hairpin motif. A Helicase C-terminal domain is found at 434–600 (QIDDLLSEIQ…TINKKIHDLI (167 aa)). One can recognise a UVR domain in the interval 627–662 (QKTIDNIEKEMKQAAKDLDFEKATELRDMLFELKAE).

It belongs to the UvrB family. As to quaternary structure, forms a heterotetramer with UvrA during the search for lesions. Interacts with UvrC in an incision complex.

Its subcellular location is the cytoplasm. Functionally, the UvrABC repair system catalyzes the recognition and processing of DNA lesions. A damage recognition complex composed of 2 UvrA and 2 UvrB subunits scans DNA for abnormalities. Upon binding of the UvrA(2)B(2) complex to a putative damaged site, the DNA wraps around one UvrB monomer. DNA wrap is dependent on ATP binding by UvrB and probably causes local melting of the DNA helix, facilitating insertion of UvrB beta-hairpin between the DNA strands. Then UvrB probes one DNA strand for the presence of a lesion. If a lesion is found the UvrA subunits dissociate and the UvrB-DNA preincision complex is formed. This complex is subsequently bound by UvrC and the second UvrB is released. If no lesion is found, the DNA wraps around the other UvrB subunit that will check the other stand for damage. The polypeptide is UvrABC system protein B (Staphylococcus aureus (strain Mu50 / ATCC 700699)).